Here is a 417-residue protein sequence, read N- to C-terminus: Phosphoglycerate kinase, cytosolic (417 aa).

12 residues coordinate (2R)-3-phosphoglycerate: valine 23, aspartate 24, phenylalanine 25, asparagine 26, arginine 39, serine 61, histidine 62, glycine 64, arginine 65, arginine 132, histidine 168, and arginine 169. Positions 214 and 215 each coordinate ADP. CDP is bound at residue glycine 214. Alanine 215 and lysine 216 together coordinate AMP. Residue alanine 215 coordinates ATP. Alanine 215 serves as a coordination point for Mg(2+). Lysine 216 is a binding site for (2R)-3-phosphoglycerate. Aspartate 219 is a CDP binding site. Mg(2+) is bound at residue aspartate 219. ADP contacts are provided by lysine 220 and glycine 238. Residue lysine 220 coordinates AMP. Lysine 220 provides a ligand contact to ATP. Glycine 238 serves as a coordination point for CDP. 2 residues coordinate AMP: alanine 239 and alanine 311. ATP contacts are provided by alanine 239 and alanine 311. Residues alanine 311 and asparagine 335 each contribute to the ADP site. Positions 336 and 341 each coordinate CDP. ADP contacts are provided by phenylalanine 341, glutamate 342, aspartate 374, and threonine 375. Glutamate 342 is a binding site for AMP. 3 residues coordinate ATP: glutamate 342, aspartate 374, and threonine 375. Aspartate 374 is a binding site for Mg(2+).

This sequence belongs to the phosphoglycerate kinase family. In terms of assembly, monomer. Mg(2+) is required as a cofactor.

Its subcellular location is the cytoplasm. It carries out the reaction (2R)-3-phosphoglycerate + ATP = (2R)-3-phospho-glyceroyl phosphate + ADP. It participates in carbohydrate degradation; glycolysis; pyruvate from D-glyceraldehyde 3-phosphate: step 2/5. This is Phosphoglycerate kinase, cytosolic (PGKB) from Crithidia fasciculata.